The primary structure comprises 229 residues: Cytidylate kinase (229 aa).

12–20 (GPSGAGKGT) is an ATP binding site.

This sequence belongs to the cytidylate kinase family. Type 1 subfamily.

The protein localises to the cytoplasm. The catalysed reaction is CMP + ATP = CDP + ADP. It carries out the reaction dCMP + ATP = dCDP + ADP. This Serratia proteamaculans (strain 568) protein is Cytidylate kinase.